A 426-amino-acid polypeptide reads, in one-letter code: Kynureninase (426 aa).

Pyridoxal 5'-phosphate contacts are provided by residues Leu-110, Ser-111, 138–141 (FPSD), Asp-223, His-226, and Tyr-248. Position 249 is an N6-(pyridoxal phosphate)lysine (Lys-249). Pyridoxal 5'-phosphate is bound by residues Trp-279 and Asn-307.

Belongs to the kynureninase family. In terms of assembly, homodimer. It depends on pyridoxal 5'-phosphate as a cofactor.

The catalysed reaction is L-kynurenine + H2O = anthranilate + L-alanine + H(+). It carries out the reaction 3-hydroxy-L-kynurenine + H2O = 3-hydroxyanthranilate + L-alanine + H(+). Its pathway is amino-acid degradation; L-kynurenine degradation; L-alanine and anthranilate from L-kynurenine: step 1/1. It functions in the pathway cofactor biosynthesis; NAD(+) biosynthesis; quinolinate from L-kynurenine: step 2/3. Catalyzes the cleavage of L-kynurenine (L-Kyn) and L-3-hydroxykynurenine (L-3OHKyn) into anthranilic acid (AA) and 3-hydroxyanthranilic acid (3-OHAA), respectively. This Myxococcus xanthus (strain DK1622) protein is Kynureninase.